A 229-amino-acid chain; its full sequence is Uracil-DNA glycosylase (229 aa).

The active-site Proton acceptor is the Asp-64.

Belongs to the uracil-DNA glycosylase (UDG) superfamily. UNG family. As to quaternary structure, monomer.

Its subcellular location is the cytoplasm. The catalysed reaction is Hydrolyzes single-stranded DNA or mismatched double-stranded DNA and polynucleotides, releasing free uracil.. In terms of biological role, excises uracil residues from the DNA which can arise as a result of misincorporation of dUMP residues by DNA polymerase or due to deamination of cytosine. The chain is Uracil-DNA glycosylase from Escherichia coli O157:H7.